Reading from the N-terminus, the 265-residue chain is Type 1 encapsulin shell protein (265 aa).

FMN-binding positions include arginine 79–threonine 81 and tryptophan 87. The pore-forming loop stretch occupies residues glutamate 184–proline 189. Glutamate 235 contributes to the FMN binding site.

This sequence belongs to the encapsulin family. Family 1 subfamily. As to quaternary structure, this encapsulin nanocompartment is formed by 60 subunits; monomers form pentamers which assemble to form shells. There are 12 pores where the pentamers meet as well as 3-fold axis channels and dimer channels; none are larger than 3-4 Angstroms in diameter. The N-terminus of the protein is inside the shell, the C-terminus is outside. It depends on FMN as a cofactor.

The protein localises to the encapsulin nanocompartment. Functionally, shell component of a type 1 encapsulin nanocompartment. Assembles into proteinaceous shells 23-24 nm in diameter with 2-2.5 nm thick walls. Cargo protein Flp (ferritin-like protein, may store iron) is targeted to the interior via its C-terminal extension. The protein is Type 1 encapsulin shell protein of Thermotoga petrophila (strain ATCC BAA-488 / DSM 13995 / JCM 10881 / RKU-1).